The primary structure comprises 382 residues: Galactose-1-phosphate uridylyltransferase (382 aa).

2 residues coordinate Zn(2+): C52 and C55. Residues A61 and 77-78 (ND) each bind UDP-alpha-D-glucose. Position 121 (H121) interacts with Zn(2+). N185 serves as a coordination point for UDP-alpha-D-glucose. H196 is a binding site for Zn(2+). H198 (tele-UMP-histidine intermediate) is an active-site residue. Residue Q200 coordinates UDP-alpha-D-glucose. Residues E214, H313, H330, and H332 each contribute to the Fe cation site. Residues 345 to 348 (KFLV) and 350 to 351 (FE) each bind UDP-alpha-D-glucose.

This sequence belongs to the galactose-1-phosphate uridylyltransferase type 1 family. In terms of assembly, homodimer. Requires Zn(2+) as cofactor.

The enzyme catalyses alpha-D-galactose 1-phosphate + UDP-alpha-D-glucose = alpha-D-glucose 1-phosphate + UDP-alpha-D-galactose. It functions in the pathway carbohydrate metabolism; galactose metabolism. Essential for growth on galactose but not for cellulase induction. The chain is Galactose-1-phosphate uridylyltransferase (gal7) from Hypocrea jecorina (Trichoderma reesei).